A 496-amino-acid polypeptide reads, in one-letter code: Hexokinase-1 (496 aa).

Residues 4-24 form a helical membrane-spanning segment; it reads VAVGATVVCTAAVCAVAVLVV. The Hexokinase domain maps to 35 to 487; the sequence is GRVLAILKAF…SGIGAALLAA (453 aa). The segment at 90–228 is hexokinase small subdomain; sequence SGDEKGLFYA…GLDMRIAALV (139 aa). ADP is bound by residues glycine 104, threonine 105, and asparagine 106. Residues threonine 194, lysine 195, asparagine 229, and aspartate 230 each coordinate D-glucose. Residues 229-476 form a hexokinase large subdomain region; sequence NDTVGTLAGG…GSVEVTHSND (248 aa). Threonine 253 serves as a coordination point for ADP. Asparagine 256, glutamate 284, and glutamate 315 together coordinate D-glucose. Glycine 441 serves as a coordination point for ADP.

The protein belongs to the hexokinase family. Interacts with RPT5B in nucleus. Interacts with RHIP1. Interacts with KING1 in mitochondria. Interacts with CLF (via SANT domain) and EZA1/SWN (via SANT domain) in nucleus. As to expression, highly expressed in flowers and siliques, at intermediate levels in roots and stems, and at lower levels in rosette and cauline leaves.

The protein resides in the mitochondrion outer membrane. It localises to the nucleus. It carries out the reaction a D-hexose + ATP = a D-hexose 6-phosphate + ADP + H(+). It catalyses the reaction D-fructose + ATP = D-fructose 6-phosphate + ADP + H(+). The enzyme catalyses D-glucose + ATP = D-glucose 6-phosphate + ADP + H(+). It functions in the pathway carbohydrate metabolism; hexose metabolism. The protein operates within carbohydrate degradation; glycolysis; D-glyceraldehyde 3-phosphate and glycerone phosphate from D-glucose: step 1/4. Functionally, fructose and glucose phosphorylating enzyme. May be involved in the phosphorylation of glucose during the export from mitochondrion to cytosol. Acts as a sugar sensor which may regulate sugar-dependent gene repression or activation. Mediates the effects of sugar on plant growth and development independently of its catalytic activity or the sugar metabolism. May regulate the execution of program cell death in plant cells. Promotes roots and leaves growth. Together with sugar, is involved in the regulation of the expression of aquaporin genes, and reduces leaf water conductance, to coordinate sugar levels with the loss of water through transpiration. Regulates cell proliferation and expansion early during leaf development. Involved in sucrose-induced leaf growth stimulation independently of GPT2. May participate to the stimulation of hypocotyl elongation under long-day (LD) conditions. Forms a nuclear complex with CLF and EZA1/SWN to target common glucose-responsive genes and regulate glucose signaling. Is required for CLF- and EZA1/SWN-mediated histone H3 trimethylation on 'Lys-27' (H3K27me3) and glucose-mediated gene repression. This Arabidopsis thaliana (Mouse-ear cress) protein is Hexokinase-1.